Here is a 463-residue protein sequence, read N- to C-terminus: NADH dehydrogenase [ubiquinone] iron-sulfur protein 2, mitochondrial (463 aa).

The N-terminal 33 residues, 1–33, are a transit peptide targeting the mitochondrion; sequence MAALRALCRLRGAAAQVLRPGAGVRLPIQPSRG. Lys62 carries the post-translational modification N6-acetyllysine. Residue Arg118 is modified to Symmetric dimethylarginine. [4Fe-4S] cluster-binding residues include Cys326, Cys332, and Cys347.

The protein belongs to the complex I 49 kDa subunit family. In terms of assembly, core subunit of respiratory chain NADH dehydrogenase (Complex I) which is composed of 45 different subunits. Component of the iron-sulfur (IP) fragment of the enzyme. Interacts with NDUFAF3. Interacts with NDUFAF7. Interacts with CERS2. Requires [4Fe-4S] cluster as cofactor. Dimethylation at Arg-118 by NDUFAF7 takes place after NDUFS2 assembles into the complex I, leading to stabilize the early intermediate complex.

Its subcellular location is the mitochondrion inner membrane. The enzyme catalyses a ubiquinone + NADH + 5 H(+)(in) = a ubiquinol + NAD(+) + 4 H(+)(out). Functionally, core subunit of the mitochondrial membrane respiratory chain NADH dehydrogenase (Complex I) which catalyzes electron transfer from NADH through the respiratory chain, using ubiquinone as an electron acceptor. Essential for the catalytic activity and assembly of complex I. Redox-sensitive, critical component of the oxygen-sensing pathway in the pulmonary vasculature which plays a key role in acute pulmonary oxygen-sensing and hypoxic pulmonary vasoconstriction. Plays an important role in carotid body sensing of hypoxia. Essential for glia-like neural stem and progenitor cell proliferation, differentiation and subsequent oligodendrocyte or neuronal maturation. This Bos taurus (Bovine) protein is NADH dehydrogenase [ubiquinone] iron-sulfur protein 2, mitochondrial (NDUFS2).